The chain runs to 180 residues: ATP-dependent protease subunit HslV (180 aa).

Thr-10 is an active-site residue. Positions 165, 168, and 171 each coordinate Na(+).

It belongs to the peptidase T1B family. HslV subfamily. As to quaternary structure, a double ring-shaped homohexamer of HslV is capped on each side by a ring-shaped HslU homohexamer. The assembly of the HslU/HslV complex is dependent on binding of ATP.

It localises to the cytoplasm. The enzyme catalyses ATP-dependent cleavage of peptide bonds with broad specificity.. Its activity is regulated as follows. Allosterically activated by HslU binding. Functionally, protease subunit of a proteasome-like degradation complex believed to be a general protein degrading machinery. This Koribacter versatilis (strain Ellin345) protein is ATP-dependent protease subunit HslV.